Here is a 435-residue protein sequence, read N- to C-terminus: Probable exopolygalacturonase B (435 aa).

The N-terminal stretch at 1 to 15 (MKFFLATLFASAVSS) is a signal peptide. Asparagine 59, asparagine 184, and asparagine 224 each carry an N-linked (GlcNAc...) asparagine glycan. PbH1 repeat units lie at residues 208–239 (SKDV…DSLN), 240–261 (VDGL…SPKP), 262–283 (NTTN…SMGS), 294–315 (IEHA…RLKA), and 326–347 (INNI…VLDQ). Aspartate 254 functions as the Proton donor in the catalytic mechanism. The cysteines at positions 256 and 273 are disulfide-linked. Asparagine 262 and asparagine 274 each carry an N-linked (GlcNAc...) asparagine glycan. Histidine 277 is a catalytic residue. N-linked (GlcNAc...) asparagine glycans are attached at residues asparagine 301, asparagine 328, asparagine 365, and asparagine 373. One copy of the PbH1 6 repeat lies at 366-388 (VTNILFENISGTSSGKNGKVVAD). Cysteine 391 and cysteine 397 are oxidised to a cystine. Asparagine 406 carries N-linked (GlcNAc...) asparagine glycosylation.

It belongs to the glycosyl hydrolase 28 family.

The protein resides in the secreted. It carries out the reaction [(1-&gt;4)-alpha-D-galacturonosyl](n) + H2O = alpha-D-galacturonate + [(1-&gt;4)-alpha-D-galacturonosyl](n-1). Functionally, specific in hydrolyzing the terminal glycosidic bond of polygalacturonic acid and oligogalacturonates. The sequence is that of Probable exopolygalacturonase B (pgxB) from Aspergillus oryzae (strain ATCC 42149 / RIB 40) (Yellow koji mold).